Reading from the N-terminus, the 342-residue chain is Anthranilate phosphoribosyltransferase (342 aa).

5-phospho-alpha-D-ribose 1-diphosphate contacts are provided by residues glycine 79, 82–83 (GD), threonine 87, 89–92 (NIST), 107–115 (KHCNQRISS), and serine 119. Glycine 79 is an anthranilate binding site. Serine 91 contributes to the Mg(2+) binding site. Anthranilate is bound at residue asparagine 110. Arginine 165 contacts anthranilate. Mg(2+) contacts are provided by aspartate 223 and glutamate 224.

It belongs to the anthranilate phosphoribosyltransferase family. Homodimer. The cofactor is Mg(2+).

It carries out the reaction N-(5-phospho-beta-D-ribosyl)anthranilate + diphosphate = 5-phospho-alpha-D-ribose 1-diphosphate + anthranilate. The protein operates within amino-acid biosynthesis; L-tryptophan biosynthesis; L-tryptophan from chorismate: step 2/5. Catalyzes the transfer of the phosphoribosyl group of 5-phosphorylribose-1-pyrophosphate (PRPP) to anthranilate to yield N-(5'-phosphoribosyl)-anthranilate (PRA). This is Anthranilate phosphoribosyltransferase from Buchnera aphidicola subsp. Acyrthosiphon pisum (strain Tuc7).